Consider the following 449-residue polypeptide: Phosphoglucosamine mutase (449 aa).

Catalysis depends on S101, which acts as the Phosphoserine intermediate. 4 residues coordinate Mg(2+): S101, D241, D243, and D245. A Phosphoserine modification is found at S101.

This sequence belongs to the phosphohexose mutase family. Mg(2+) serves as cofactor. Activated by phosphorylation.

It carries out the reaction alpha-D-glucosamine 1-phosphate = D-glucosamine 6-phosphate. Its function is as follows. Catalyzes the conversion of glucosamine-6-phosphate to glucosamine-1-phosphate. This chain is Phosphoglucosamine mutase, found in Alkaliphilus oremlandii (strain OhILAs) (Clostridium oremlandii (strain OhILAs)).